Here is a 169-residue protein sequence, read N- to C-terminus: Peptide deformylase 1 (169 aa).

The Fe cation site is built by Cys92 and His134. Glu135 is a catalytic residue. Residue His138 coordinates Fe cation.

Belongs to the polypeptide deformylase family. Fe(2+) is required as a cofactor.

It carries out the reaction N-terminal N-formyl-L-methionyl-[peptide] + H2O = N-terminal L-methionyl-[peptide] + formate. Removes the formyl group from the N-terminal Met of newly synthesized proteins. Requires at least a dipeptide for an efficient rate of reaction. N-terminal L-methionine is a prerequisite for activity but the enzyme has broad specificity at other positions. The polypeptide is Peptide deformylase 1 (Ralstonia nicotianae (strain ATCC BAA-1114 / GMI1000) (Ralstonia solanacearum)).